The following is a 335-amino-acid chain: MVSVGTQSHSGRDQAEQNPSVENVRYDWQLDEALAIYNLPLLELIGRANSVHRRYHDAGHLQKSSLLSIKTGGCPEDCGYCSQSAHHDVELTREKLMNPTAVIGLAAKAKKAGAERFCMGAAWRKVRDGKEFDAVLEMIRGVRALDMEACVTLGMVNEDQARRLAEAGLTAYNHNLDTGPAYYPQIVSTHSYQDRLETLAKIRDAGIALCTGGIIGLGESPRDRVEMLVVLAGMNPHPESVPVNMLVPIEGTPLADADPVDPLEIVRMIATARLMMPQSMVRLSAGRSTLSRETQILCLVAGANSIFYGNVLLTTPNADMAADDALLEALGVTAE.

The segment at 1-20 (MVSVGTQSHSGRDQAEQNPS) is disordered. The region spanning 59–284 (GHLQKSSLLS…MMPQSMVRLS (226 aa)) is the Radical SAM core domain. Cysteine 74, cysteine 78, and cysteine 81 together coordinate [4Fe-4S] cluster. [2Fe-2S] cluster-binding residues include cysteine 118, cysteine 150, cysteine 210, and arginine 282.

The protein belongs to the radical SAM superfamily. Biotin synthase family. Homodimer. It depends on [4Fe-4S] cluster as a cofactor. The cofactor is [2Fe-2S] cluster.

The enzyme catalyses (4R,5S)-dethiobiotin + (sulfur carrier)-SH + 2 reduced [2Fe-2S]-[ferredoxin] + 2 S-adenosyl-L-methionine = (sulfur carrier)-H + biotin + 2 5'-deoxyadenosine + 2 L-methionine + 2 oxidized [2Fe-2S]-[ferredoxin]. It functions in the pathway cofactor biosynthesis; biotin biosynthesis; biotin from 7,8-diaminononanoate: step 2/2. In terms of biological role, catalyzes the conversion of dethiobiotin (DTB) to biotin by the insertion of a sulfur atom into dethiobiotin via a radical-based mechanism. This chain is Biotin synthase, found in Zymomonas mobilis subsp. mobilis (strain ATCC 31821 / ZM4 / CP4).